Consider the following 463-residue polypeptide: Secretogranin-3 (463 aa).

The signal sequence occupies residues 1-20 (MGPKYVFITAIIGVFWHVQG). Disordered stretches follow at residues 87-111 (VKRS…DSTK), 225-267 (DDDK…PEED), and 353-398 (EDKN…KGKA). 2 stretches are compositionally biased toward basic and acidic residues: residues 102 to 111 (GTLDDADSTK) and 229 to 262 (QEGK…RNEL).

As to quaternary structure, interacts with CHGA. Interacts with secretogranin II/SCG2. Interacts (via C-terminus) with CPE.

Its subcellular location is the cytoplasmic vesicle. It is found in the secretory vesicle. It localises to the secretory vesicle membrane. The protein resides in the secreted. In terms of biological role, member of the granin protein family that regulates the biogenesis of secretory granules. Acts as a sorting receptor for intragranular proteins including chromogranin A/CHGA. May also play a role in angiogenesis. Promotes endothelial proliferation, migration and tube formation through MEK/ERK signaling pathway. The chain is Secretogranin-3 (scg3) from Xenopus tropicalis (Western clawed frog).